The chain runs to 308 residues: Endonuclease G, mitochondrial (308 aa).

His-148 functions as the Proton acceptor in the catalytic mechanism. Asn-180 is a binding site for Mg(2+).

The protein belongs to the DNA/RNA non-specific endonuclease family. As to quaternary structure, homodimer; disulfide-linked. Interacts with crn-5, crn-4, crn-1 and cyn-13. Requires Mg(2+) as cofactor.

It localises to the mitochondrion. Its function is as follows. Endonuclease important for programmed cell death; it mediates apoptotic DNA fragmentation. This is Endonuclease G, mitochondrial (cps-6) from Caenorhabditis elegans.